The sequence spans 221 residues: Max dimerization protein 1 (221 aa).

The Nuclear localization signal signature appears at 21 to 49; it reads RREREAEHGYASMLPYNSKERDGLKRKSK. Disordered stretches follow at residues 28–67 and 176–202; these read HGYA…EKNR and DWSS…DEGY. Residues 55–107 enclose the bHLH domain; that stretch reads NSRSTHNEMEKNRRAHLRLCLEKLKILVPLGPESNRHTTLSLLTRAKSHIKKL. Residues 192-202 show a composition bias toward polar residues; the sequence is SMQSICSDEGY.

As to quaternary structure, efficient DNA binding requires dimerization with another bHLH protein. Binds DNA as a heterodimer with MAX.

It is found in the nucleus. Transcriptional repressor. MAD binds with MAX to form a sequence-specific DNA-binding protein complex which recognizes the core sequence 5'-CAC[GA]TG-3'. MAD thus antagonizes MYC transcriptional activity by competing for MAX. The sequence is that of Max dimerization protein 1 (mxd1) from Xenopus tropicalis (Western clawed frog).